We begin with the raw amino-acid sequence, 185 residues long: Ribosome-recycling factor (185 aa).

It belongs to the RRF family.

It localises to the cytoplasm. Responsible for the release of ribosomes from messenger RNA at the termination of protein biosynthesis. May increase the efficiency of translation by recycling ribosomes from one round of translation to another. The chain is Ribosome-recycling factor from Beutenbergia cavernae (strain ATCC BAA-8 / DSM 12333 / CCUG 43141 / JCM 11478 / NBRC 16432 / NCIMB 13614 / HKI 0122).